A 382-amino-acid polypeptide reads, in one-letter code: Secreted RxLR effector protein 118 (382 aa).

Residues 1-21 form the signal peptide; the sequence is MRGAYYVTIALLVVASSQISA. A RxLR-dEER motif is present at residues 48-65; the sequence is RSLRGSRDVSNDVAIEER. The interval 308–382 is disordered; sequence MNKASTSKGK…AVTSLSSISN (75 aa). Over residues 310–323 the composition is skewed to polar residues; the sequence is KASTSKGKSSVFTR.

This sequence belongs to the RxLR effector family.

It is found in the secreted. It localises to the host nucleus. In terms of biological role, secreted effector that completely suppresses the host cell death induced by cell death-inducing proteins. The sequence is that of Secreted RxLR effector protein 118 from Plasmopara viticola (Downy mildew of grapevine).